The chain runs to 126 residues: Defensin-like protein 183 (126 aa).

The N-terminal stretch at methionine 1–alanine 26 is a signal peptide. Disulfide bonds link cysteine 29–cysteine 68, cysteine 36–cysteine 55, cysteine 39–cysteine 62, cysteine 43–cysteine 64, cysteine 80–cysteine 126, cysteine 91–cysteine 111, cysteine 96–cysteine 120, and cysteine 100–cysteine 122.

The protein belongs to the DEFL family.

It localises to the secreted. The sequence is that of Defensin-like protein 183 (LCR19) from Arabidopsis thaliana (Mouse-ear cress).